A 457-amino-acid chain; its full sequence is MILPTIAIIGRPNVGKSTLVNRLCQSNDAIVFDKPGVTRDRTYQNASWGGKEFQIVDTGGLVFDDDSEFLPEIRTQVFLALEEASLALLVVDGNQGVTDGDLSIAKWLRNSSCKTIVAVNKCESTTLGISLASEFWKLGLGEPNPVSAIHGSGTGDLLDLVIGELPENNIRDDEEKIMMSIIGRPNVGKSSLLNSICGEKRAIVSDISGTTTDSIDTLIKKGDNYWKIIDTAGIRRKKNVKYGTEFFGINRAFKSIDRSDVCVLVIDAVDGVTDQDQKLAGRIEEQGRACIIVVNKWDLVEKNSSTIYQVEKELRSKLYFLHWSKMIFISALTGQRVDNIFEHALNAVNQHRRRVTTSVVNEVLKESISWKSPPTKRSGKQGRLYYGTQVKNKPPTFTLFVNDPKLFGITYRRYIEKQIRLNLGFEGTPLILLWRGKQQRALNKEVERENIEVIQKD.

2 EngA-type G domains span residues 4–169 (PTIA…PENN) and 177–352 (IMMS…NQHR). GTP-binding positions include 10 to 17 (GRPNVGKS), 57 to 61 (DTGGL), 120 to 123 (NKCE), 183 to 190 (GRPNVGKS), 230 to 234 (DTAGI), and 295 to 298 (NKWD). One can recognise a KH-like domain in the interval 353–438 (RRVTTSVVNE…PLILLWRGKQ (86 aa)).

This sequence belongs to the TRAFAC class TrmE-Era-EngA-EngB-Septin-like GTPase superfamily. EngA (Der) GTPase family. As to quaternary structure, associates with the 50S ribosomal subunit.

GTPase that plays an essential role in the late steps of ribosome biogenesis. This is GTPase Der from Prochlorococcus marinus (strain MIT 9215).